The sequence spans 176 residues: Ribosome rescue factor SmrB (176 aa).

Residues 93-168 form the Smr domain; it reads LDLHGYRQSE…GDAALLVLID (76 aa).

Belongs to the SmrB family. In terms of assembly, associates with collided ribosomes, but not with correctly translating polysomes.

Acts as a ribosome collision sensor. Detects stalled/collided disomes (pairs of ribosomes where the leading ribosome is stalled and a second ribosome has collided with it) and endonucleolytically cleaves mRNA at the 5' boundary of the stalled ribosome. Stalled/collided disomes form a new interface (primarily via the 30S subunits) that binds SmrB. Cleaved mRNA becomes available for tmRNA ligation, leading to ribosomal subunit dissociation and rescue of stalled ribosomes. In Shewanella sp. (strain MR-4), this protein is Ribosome rescue factor SmrB.